A 430-amino-acid polypeptide reads, in one-letter code: Tol-Pal system protein TolB (430 aa).

Residues 1 to 21 (MKQALRVAFGFLMLWAAVLHA) form the signal peptide.

Belongs to the TolB family. As to quaternary structure, the Tol-Pal system is composed of five core proteins: the inner membrane proteins TolA, TolQ and TolR, the periplasmic protein TolB and the outer membrane protein Pal. They form a network linking the inner and outer membranes and the peptidoglycan layer.

It is found in the periplasm. Part of the Tol-Pal system, which plays a role in outer membrane invagination during cell division and is important for maintaining outer membrane integrity. TolB occupies a key intermediary position in the Tol-Pal system because it communicates directly with both membrane-embedded components, Pal in the outer membrane and TolA in the inner membrane. This chain is Tol-Pal system protein TolB, found in Salmonella typhi.